The following is a 286-amino-acid chain: 4-diphosphocytidyl-2-C-methyl-D-erythritol kinase (286 aa).

Residue Lys-11 is part of the active site. 93–103 (PFGAGLGGGSS) provides a ligand contact to ATP. Asp-135 is a catalytic residue.

The protein belongs to the GHMP kinase family. IspE subfamily.

It carries out the reaction 4-CDP-2-C-methyl-D-erythritol + ATP = 4-CDP-2-C-methyl-D-erythritol 2-phosphate + ADP + H(+). Its pathway is isoprenoid biosynthesis; isopentenyl diphosphate biosynthesis via DXP pathway; isopentenyl diphosphate from 1-deoxy-D-xylulose 5-phosphate: step 3/6. Its function is as follows. Catalyzes the phosphorylation of the position 2 hydroxy group of 4-diphosphocytidyl-2C-methyl-D-erythritol. The polypeptide is 4-diphosphocytidyl-2-C-methyl-D-erythritol kinase (Prosthecochloris aestuarii (strain DSM 271 / SK 413)).